Here is a 103-residue protein sequence, read N- to C-terminus: Eukaryotic translation initiation factor 4E-1A-binding protein homolog (103 aa).

The interval 49–103 (NSPLSKTPPPQLAHITNTELNKKVEKSTTTPTTTTPPTTTAKPKPTNDDDIFPME) is disordered. A compositionally biased stretch (low complexity) spans 76–92 (TTTPTTTTPPTTTAKPK).

Belongs to the eIF4E-binding protein family.

Functionally, regulates assembly of the eIF4F complex. This Dictyostelium discoideum (Social amoeba) protein is Eukaryotic translation initiation factor 4E-1A-binding protein homolog (febA).